The primary structure comprises 97 residues: MQAQTFSHLHSQSSQRTTEVTLYLTIPESYRQEPIVTQLVSRYQLQVNILAATLGTNGGQGQFKLTLIGHAQAINNALAYLEQLQVTIVLDQESDGW.

Functionally, may have a regulatory function. This is an uncharacterized protein from Synechocystis sp. (strain ATCC 27184 / PCC 6803 / Kazusa).